The following is a 407-amino-acid chain: Vancomycin aglycone glucosyltransferase (407 aa).

It belongs to the glycosyltransferase 28 family.

The catalysed reaction is vancomycin aglycone + UDP-alpha-D-glucose = devancoaminyl-vancomycin + UDP. The protein operates within antibiotic biosynthesis; vancomycin biosynthesis. Glucosyltransferase that transfers glucose to the 4-OH-Phegly(4) residue of vancomycin aglycone (AGV) to produce devancoaminyl-vancomycin (DVV) in the biosynthesis of glycopeptide antibiotic chloroeremomycin, a member of the vancomycin group of antibiotics. In Amycolatopsis orientalis (Nocardia orientalis), this protein is Vancomycin aglycone glucosyltransferase (gtfB).